The primary structure comprises 255 residues: Small ribosomal subunit protein eS1 (255 aa).

Ala2 is modified (N-acetylalanine; partial).

Belongs to the eukaryotic ribosomal protein eS1 family. As to quaternary structure, component of the small ribosomal subunit. Mature ribosomes consist of a small (40S) and a large (60S) subunit. The 40S subunit contains about 33 different proteins and 1 molecule of RNA (18S). The 60S subunit contains about 49 different proteins and 3 molecules of RNA (25S, 5.8S and 5S).

Its subcellular location is the cytoplasm. The sequence is that of Small ribosomal subunit protein eS1 from Arthroderma otae (strain ATCC MYA-4605 / CBS 113480) (Microsporum canis).